Consider the following 195-residue polypeptide: Neurturin (195 aa).

The signal sequence occupies residues 1 to 19 (MRRWKAAALVSLICSSLLS). Positions 20 to 95 (VWMCQEGLLL…RAGPRRRRAR (76 aa)) are excised as a propeptide. 3 disulfide bridges follow: Cys101–Cys163, Cys128–Cys192, and Cys132–Cys194. Heparan sulfate group is bound by residues Arg147, Arg156, and Arg158.

It belongs to the TGF-beta family. GDNF subfamily. As to quaternary structure, homodimer; disulfide-linked. Interacts with GFRA2 coreceptor and RET: forms a 2:2:2 ternary complex composed of NRTN ligand, GFRA2 and RET receptor. Also forms a 4:4:4 tetrameric complex composed of 4 copies of NRTN ligand, GFRA2 and RET receptor, which prevents endocytosis of RET. Widespread distribution.

The protein resides in the secreted. Growth factor that supports the survival of sympathetic neurons in culture. May regulate the development and maintenance of the CNS. Involved in the development of the neural crest. Might control the size of non-neuronal cell population such as haemopoietic cells. Acts by binding to its coreceptor, GFRA2, leading to autophosphorylation and activation of the RET receptor. Heparan sulfate-binding is required for signaling. The sequence is that of Neurturin (Nrtn) from Mus musculus (Mouse).